The sequence spans 1164 residues: Toxin subunit YenA1 (1164 aa).

The interval 106–131 (RLEKSNSPLVPQTSSSTDASSESQTN) is disordered. A compositionally biased stretch (low complexity) spans 118-130 (TSSSTDASSESQT).

In terms of assembly, semipurified toxin complex consists of at least YenA1, YenA2, YenB, YenC1, YenC2, Chi1 and Chi2. The Yen-TC:K9 subcomplex is about 26 nm tall and 22 nm in diameter with 5-fold symmetry and 5 copies of YenA1, YenA2, Chi1 and Chi2; the chitinase subunits may be solvent accessible on the exterior the complex. The Yen-TC:K9 subcomplex has no insecticidal activity. The native complex with additional YenB, YenC1 and YenC2 subunits is 16 nm taller and is insecticidal; the toxicity-conferring subunits are present at about 1 copy each.

The protein localises to the secreted. Toxin complex is secreted when grown at 25 degrees Celsius or less; at higher temperatures the proteins are present intracellularly but not secreted. Its function is as follows. Part of an orally active toxin complex (TC) with strong insecticidal effects on larvae of the Coleoptera Costelytra zealandica, Acrossidius tasmania and Adoryphorus couloni and some Lepidoptera larvae. The TC has an endochitinase activity. This Yersinia entomophaga protein is Toxin subunit YenA1.